A 248-amino-acid polypeptide reads, in one-letter code: Phosphatidylglycerol--prolipoprotein diacylglyceryl transferase (248 aa).

The next 3 membrane-spanning stretches (helical) occupy residues 6 to 26 (FSIFGIDIMWYGILITLGVIL), 48 to 68 (ILVWALPLAIVGARAYYVIFE), and 84 to 104 (GGGLAIYGGIIAAVITCYVIC). Arginine 130 contacts a 1,2-diacyl-sn-glycero-3-phospho-(1'-sn-glycerol). The next 2 membrane-spanning stretches (helical) occupy residues 187-207 (GQITSMYMILYGILRFFVEGL) and 214-234 (IGALRVSQLVSIAIIIAGVIL).

Belongs to the Lgt family.

It localises to the cell membrane. It carries out the reaction L-cysteinyl-[prolipoprotein] + a 1,2-diacyl-sn-glycero-3-phospho-(1'-sn-glycerol) = an S-1,2-diacyl-sn-glyceryl-L-cysteinyl-[prolipoprotein] + sn-glycerol 1-phosphate + H(+). It participates in protein modification; lipoprotein biosynthesis (diacylglyceryl transfer). Its function is as follows. Catalyzes the transfer of the diacylglyceryl group from phosphatidylglycerol to the sulfhydryl group of the N-terminal cysteine of a prolipoprotein, the first step in the formation of mature lipoproteins. The polypeptide is Phosphatidylglycerol--prolipoprotein diacylglyceryl transferase (Finegoldia magna (strain ATCC 29328 / DSM 20472 / WAL 2508) (Peptostreptococcus magnus)).